A 163-amino-acid polypeptide reads, in one-letter code: Glycine cleavage system H protein, mitochondrial (163 aa).

The N-terminal 34 residues, 1 to 34, are a transit peptide targeting the mitochondrion; the sequence is MALRMWASSAANALGVSCAPKSHLLPALSLSRCF. Residues 56–137 form the Lipoyl-binding domain; sequence VATIGITDHA…YEEGWMVKVK (82 aa). Position 96 is an N6-lipoyllysine (Lys96).

This sequence belongs to the GcvH family. In terms of assembly, the glycine cleavage system is composed of four proteins: P, T, L and H. The cofactor is (R)-lipoate.

It is found in the mitochondrion. The glycine cleavage system catalyzes the degradation of glycine. The H protein shuttles the methylamine group of glycine from the P protein to the T protein. The chain is Glycine cleavage system H protein, mitochondrial (GDCSH) from Mesembryanthemum crystallinum (Common ice plant).